The primary structure comprises 532 residues: ATP synthase subunit alpha (532 aa).

171–178 contacts ATP; it reads GDRQTGKT.

The protein belongs to the ATPase alpha/beta chains family. In terms of assembly, F-type ATPases have 2 components, CF(1) - the catalytic core - and CF(0) - the membrane proton channel. CF(1) has five subunits: alpha(3), beta(3), gamma(1), delta(1), epsilon(1). CF(0) has three main subunits: a(1), b(2) and c(9-12). The alpha and beta chains form an alternating ring which encloses part of the gamma chain. CF(1) is attached to CF(0) by a central stalk formed by the gamma and epsilon chains, while a peripheral stalk is formed by the delta and b chains.

It is found in the cell membrane. The catalysed reaction is ATP + H2O + 4 H(+)(in) = ADP + phosphate + 5 H(+)(out). In terms of biological role, produces ATP from ADP in the presence of a proton gradient across the membrane. The alpha chain is a regulatory subunit. This is ATP synthase subunit alpha from Amoebophilus asiaticus (strain 5a2).